The following is a 114-amino-acid chain: Acetyltransferase At1g77540 (114 aa).

T2 carries the N-acetylthreonine modification. The 89-residue stretch at 18–106 (KIVWNEGKRR…RNPSWKPLIH (89 aa)) folds into the N-acetyltransferase domain. Residues 52–55 (HTYV) and 61–66 (GLGLAS) contribute to the CoA site. The active-site Nucleophile is the C87. CoA contacts are provided by residues 88 to 89 (SY), T93, and R97.

The protein localises to the peroxisome. In terms of biological role, possesses in vitro histone acetyltransferase activity with histones H3 and H4. This is Acetyltransferase At1g77540 from Arabidopsis thaliana (Mouse-ear cress).